The chain runs to 173 residues: Large ribosomal subunit protein uL5 (173 aa).

This sequence belongs to the universal ribosomal protein uL5 family. In terms of assembly, part of the 50S ribosomal subunit; contacts the 5S rRNA and probably tRNA. Forms a bridge to the 30S subunit in the 70S ribosome.

In terms of biological role, this is one of the proteins that bind and probably mediate the attachment of the 5S RNA into the large ribosomal subunit, where it forms part of the central protuberance. In the 70S ribosome it contacts protein S13 of the 30S subunit (bridge B1b), connecting the 2 subunits; this bridge is implicated in subunit movement. May contact the P site tRNA; the 5S rRNA and some of its associated proteins might help stabilize positioning of ribosome-bound tRNAs. This is Large ribosomal subunit protein uL5 from Nitrosopumilus maritimus (strain SCM1).